Reading from the N-terminus, the 502-residue chain is Probable cytosol aminopeptidase (502 aa).

Mn(2+) is bound by residues Lys269 and Asp274. Lys281 is a catalytic residue. 3 residues coordinate Mn(2+): Asp292, Asp351, and Glu353. The active site involves Arg355.

It belongs to the peptidase M17 family. The cofactor is Mn(2+).

The protein localises to the cytoplasm. The enzyme catalyses Release of an N-terminal amino acid, Xaa-|-Yaa-, in which Xaa is preferably Leu, but may be other amino acids including Pro although not Arg or Lys, and Yaa may be Pro. Amino acid amides and methyl esters are also readily hydrolyzed, but rates on arylamides are exceedingly low.. It carries out the reaction Release of an N-terminal amino acid, preferentially leucine, but not glutamic or aspartic acids.. In terms of biological role, presumably involved in the processing and regular turnover of intracellular proteins. Catalyzes the removal of unsubstituted N-terminal amino acids from various peptides. The polypeptide is Probable cytosol aminopeptidase (Vibrio parahaemolyticus serotype O3:K6 (strain RIMD 2210633)).